Reading from the N-terminus, the 89-residue chain is Small ribosomal subunit protein uS15 (89 aa).

This sequence belongs to the universal ribosomal protein uS15 family. In terms of assembly, part of the 30S ribosomal subunit. Forms a bridge to the 50S subunit in the 70S ribosome, contacting the 23S rRNA.

Functionally, one of the primary rRNA binding proteins, it binds directly to 16S rRNA where it helps nucleate assembly of the platform of the 30S subunit by binding and bridging several RNA helices of the 16S rRNA. Its function is as follows. Forms an intersubunit bridge (bridge B4) with the 23S rRNA of the 50S subunit in the ribosome. This is Small ribosomal subunit protein uS15 from Bacteroides fragilis (strain ATCC 25285 / DSM 2151 / CCUG 4856 / JCM 11019 / LMG 10263 / NCTC 9343 / Onslow / VPI 2553 / EN-2).